The chain runs to 449 residues: Ribulose bisphosphate carboxylase large chain (449 aa).

The propeptide occupies 1 to 2 (MS). The residue at position 3 (proline 3) is an N-acetylproline. N6,N6,N6-trimethyllysine is present on lysine 14. Substrate is bound by residues asparagine 123 and threonine 173. Lysine 175 acts as the Proton acceptor in catalysis. Residue lysine 177 coordinates substrate. 3 residues coordinate Mg(2+): lysine 201, aspartate 203, and glutamate 204. Lysine 201 is subject to N6-carboxylysine. Catalysis depends on histidine 294, which acts as the Proton acceptor. The substrate site is built by residue 295, histidine 327, and serine 379.

The protein belongs to the RuBisCO large chain family. Type I subfamily. Heterohexadecamer of 8 large chains and 8 small chains; disulfide-linked. The disulfide link is formed within the large subunit homodimers. The cofactor is Mg(2+). In terms of processing, the disulfide bond which can form in the large chain dimeric partners within the hexadecamer appears to be associated with oxidative stress and protein turnover.

It localises to the plastid. The protein resides in the chloroplast. It catalyses the reaction 2 (2R)-3-phosphoglycerate + 2 H(+) = D-ribulose 1,5-bisphosphate + CO2 + H2O. The enzyme catalyses D-ribulose 1,5-bisphosphate + O2 = 2-phosphoglycolate + (2R)-3-phosphoglycerate + 2 H(+). Its function is as follows. RuBisCO catalyzes two reactions: the carboxylation of D-ribulose 1,5-bisphosphate, the primary event in carbon dioxide fixation, as well as the oxidative fragmentation of the pentose substrate in the photorespiration process. Both reactions occur simultaneously and in competition at the same active site. The sequence is that of Ribulose bisphosphate carboxylase large chain from Salacia pallescens.